A 158-amino-acid polypeptide reads, in one-letter code: NAD(P)H-quinone oxidoreductase subunit J, chloroplastic (158 aa).

The protein belongs to the complex I 30 kDa subunit family. NDH is composed of at least 16 different subunits, 5 of which are encoded in the nucleus.

The protein resides in the plastid. Its subcellular location is the chloroplast thylakoid membrane. The catalysed reaction is a plastoquinone + NADH + (n+1) H(+)(in) = a plastoquinol + NAD(+) + n H(+)(out). It carries out the reaction a plastoquinone + NADPH + (n+1) H(+)(in) = a plastoquinol + NADP(+) + n H(+)(out). In terms of biological role, NDH shuttles electrons from NAD(P)H:plastoquinone, via FMN and iron-sulfur (Fe-S) centers, to quinones in the photosynthetic chain and possibly in a chloroplast respiratory chain. The immediate electron acceptor for the enzyme in this species is believed to be plastoquinone. Couples the redox reaction to proton translocation, and thus conserves the redox energy in a proton gradient. This Aethionema grandiflorum (Persian stone-cress) protein is NAD(P)H-quinone oxidoreductase subunit J, chloroplastic.